We begin with the raw amino-acid sequence, 435 residues long: Glutamyl-tRNA reductase (435 aa).

Residues 49–52, serine 114, 119–121, and glutamine 125 contribute to the substrate site; these read TCNR and EPQ. Catalysis depends on cysteine 50, which acts as the Nucleophile. NADP(+) is bound at residue 204 to 209; sequence GAGETI.

It belongs to the glutamyl-tRNA reductase family. As to quaternary structure, homodimer.

It catalyses the reaction (S)-4-amino-5-oxopentanoate + tRNA(Glu) + NADP(+) = L-glutamyl-tRNA(Glu) + NADPH + H(+). The protein operates within porphyrin-containing compound metabolism; protoporphyrin-IX biosynthesis; 5-aminolevulinate from L-glutamyl-tRNA(Glu): step 1/2. Functionally, catalyzes the NADPH-dependent reduction of glutamyl-tRNA(Glu) to glutamate 1-semialdehyde (GSA). This Actinobacillus succinogenes (strain ATCC 55618 / DSM 22257 / CCUG 43843 / 130Z) protein is Glutamyl-tRNA reductase.